A 139-amino-acid polypeptide reads, in one-letter code: Transcription antitermination protein NusB (139 aa).

This sequence belongs to the NusB family.

Its function is as follows. Involved in transcription antitermination. Required for transcription of ribosomal RNA (rRNA) genes. Binds specifically to the boxA antiterminator sequence of the ribosomal RNA (rrn) operons. The sequence is that of Transcription antitermination protein NusB from Pectobacterium carotovorum subsp. carotovorum (strain PC1).